A 394-amino-acid chain; its full sequence is Elongation factor Tu (394 aa).

A tr-type G domain is found at 10–204 (KPHVNVGTIG…ALDSYIPEPE (195 aa)). The tract at residues 19–26 (GHVDHGKT) is G1. 19–26 (GHVDHGKT) is a binding site for GTP. Thr-26 contributes to the Mg(2+) binding site. The segment at 60-64 (GITIS) is G2. Residues 81–84 (DCPG) are G3. Residues 81–85 (DCPGH) and 136–139 (NKCD) each bind GTP. Residues 136-139 (NKCD) form a G4 region. The interval 174–176 (SAL) is G5.

Belongs to the TRAFAC class translation factor GTPase superfamily. Classic translation factor GTPase family. EF-Tu/EF-1A subfamily. As to quaternary structure, monomer.

The protein localises to the cytoplasm. It carries out the reaction GTP + H2O = GDP + phosphate + H(+). Its function is as follows. GTP hydrolase that promotes the GTP-dependent binding of aminoacyl-tRNA to the A-site of ribosomes during protein biosynthesis. In Alteromonas mediterranea (strain DSM 17117 / CIP 110805 / LMG 28347 / Deep ecotype), this protein is Elongation factor Tu.